The sequence spans 84 residues: Small ribosomal subunit protein bS20 (84 aa).

The protein belongs to the bacterial ribosomal protein bS20 family.

Functionally, binds directly to 16S ribosomal RNA. This Limosilactobacillus reuteri (strain DSM 20016) (Lactobacillus reuteri) protein is Small ribosomal subunit protein bS20.